Here is a 434-residue protein sequence, read N- to C-terminus: UDP-N-acetylglucosamine 1-carboxyvinyltransferase (434 aa).

Phosphoenolpyruvate is bound at residue 22-23 (KN). Arg-97 contacts UDP-N-acetyl-alpha-D-glucosamine. Catalysis depends on Asp-121, which acts as the Proton donor. 2 residues coordinate UDP-N-acetyl-alpha-D-glucosamine: Asp-319 and Met-341.

It belongs to the EPSP synthase family. MurA subfamily.

The protein resides in the cytoplasm. It catalyses the reaction phosphoenolpyruvate + UDP-N-acetyl-alpha-D-glucosamine = UDP-N-acetyl-3-O-(1-carboxyvinyl)-alpha-D-glucosamine + phosphate. It participates in cell wall biogenesis; peptidoglycan biosynthesis. In terms of biological role, cell wall formation. Adds enolpyruvyl to UDP-N-acetylglucosamine. This Bacteroides fragilis (strain ATCC 25285 / DSM 2151 / CCUG 4856 / JCM 11019 / LMG 10263 / NCTC 9343 / Onslow / VPI 2553 / EN-2) protein is UDP-N-acetylglucosamine 1-carboxyvinyltransferase.